A 917-amino-acid polypeptide reads, in one-letter code: DNA repair endonuclease XPF (917 aa).

Residues 1–457 form a helicase-like region; that stretch reads MEPGLSGERR…EVWVNVRKGD (457 aa). Leucine-zipper regions lie at residues 233–254 and 270–298; these read LNAC…DLSL and LDPL…LQYL. Lys289 bears the N6-acetyllysine mark. The span at 454–479 shows a compositional bias: basic and acidic residues; it reads RKGDGPKRTTKSDKRPKAAPNKERAS. Disordered regions lie at residues 454–524 and 643–681; these read RKGD…SSPE and VPEE…QNGT. Positions 487–492 match the Nuclear localization signal motif; sequence KRKKQE. Over residues 507–516 the composition is skewed to basic and acidic residues; the sequence is EDKALEEDLC. Ser522 carries the post-translational modification Phosphoserine. The segment covering 643 to 653 has biased composition (basic and acidic residues); sequence VPEEREGRDET. Residues 659–814 form a nuclease region; it reads RGSAALDAPT…PSPHATAELF (156 aa). The 81-residue stretch at 684 to 764 folds into the ERCC4 domain; it reads SIVVDMREFR…RPVLLIEFDP (81 aa). Ser765 is modified (phosphoserine). A hhH2, dimerization with ERCC1 region spans residues 838 to 906; that stretch reads TLPESDRYNP…QLHDFLHTAY (69 aa). Lys912 carries the N6-acetyllysine modification.

It belongs to the XPF family. In terms of assembly, heterodimer composed of ERCC1 and ERCC4/XPF. Interacts with SLX4/BTBD12; this interaction is direct and links the ERCC1-ERCC4/XPF complex to SLX4, which may coordinate the action of the structure-specific endonuclease during DNA repair. The cofactor is Mg(2+). In terms of processing, acetylation at Lys-912 by KAT5 promotes interaction with ERCC1 by disrupting a salt bridge between Asp-908 and Lys-912, thereby exposing a second binding site for ERCC1. Deacetylated by SIRT1.

Its subcellular location is the nucleus. The protein localises to the chromosome. In terms of biological role, catalytic component of a structure-specific DNA repair endonuclease responsible for the 5-prime incision during DNA repair, and which is essential for nucleotide excision repair (NER) and interstrand cross-link (ICL) repair. This is DNA repair endonuclease XPF from Mus musculus (Mouse).